We begin with the raw amino-acid sequence, 40 residues long: Potassium channel toxin alpha-KTx 12.2 (40 aa).

Cystine bridges form between cysteine 2–cysteine 5, cysteine 10–cysteine 31, cysteine 16–cysteine 36, and cysteine 20–cysteine 38.

It belongs to the short scorpion toxin superfamily. Potassium channel inhibitor family. Alpha-KTx 12 subfamily. As to expression, expressed by the venom gland.

The protein localises to the secreted. Functionally, inhibits high conductance calcium-activated potassium channels. Reversibly inhibits Shaker B potassium channels. The polypeptide is Potassium channel toxin alpha-KTx 12.2 (Tityus trivittatus (Argentinean scorpion)).